A 239-amino-acid chain; its full sequence is Uridylate kinase (239 aa).

13–16 (KVSG) lines the ATP pocket. Position 55 (Gly-55) interacts with UMP. ATP is bound by residues Gly-56 and Arg-60. UMP contacts are provided by residues Asp-75 and 136-143 (TGNPFFTT). 4 residues coordinate ATP: Thr-163, Gln-164, Tyr-169, and Asp-172.

It belongs to the UMP kinase family. Homohexamer.

The protein resides in the cytoplasm. It carries out the reaction UMP + ATP = UDP + ADP. It participates in pyrimidine metabolism; CTP biosynthesis via de novo pathway; UDP from UMP (UMPK route): step 1/1. Inhibited by UTP. Functionally, catalyzes the reversible phosphorylation of UMP to UDP. The chain is Uridylate kinase from Bartonella quintana (strain Toulouse) (Rochalimaea quintana).